Here is a 785-residue protein sequence, read N- to C-terminus: Endonuclease MutS2 (785 aa).

Residue 331–338 participates in ATP binding; it reads GPNTGGKT. A Smr domain is found at 710–785; it reads LDLRGLYADE…GLGVTVVELA (76 aa).

Belongs to the DNA mismatch repair MutS family. MutS2 subfamily. In terms of assembly, homodimer. Binds to stalled ribosomes, contacting rRNA.

Functionally, endonuclease that is involved in the suppression of homologous recombination and thus may have a key role in the control of bacterial genetic diversity. In terms of biological role, acts as a ribosome collision sensor, splitting the ribosome into its 2 subunits. Detects stalled/collided 70S ribosomes which it binds and splits by an ATP-hydrolysis driven conformational change. Acts upstream of the ribosome quality control system (RQC), a ribosome-associated complex that mediates the extraction of incompletely synthesized nascent chains from stalled ribosomes and their subsequent degradation. Probably generates substrates for RQC. The sequence is that of Endonuclease MutS2 from Pelotomaculum thermopropionicum (strain DSM 13744 / JCM 10971 / SI).